The chain runs to 125 residues: Acidic phospholipase A2 6 (125 aa).

A signal peptide is located at residue serine 1. The propeptide occupies 2–7 (NRPMPL). Disulfide bonds link cysteine 18/cysteine 77, cysteine 33/cysteine 124, cysteine 35/cysteine 50, cysteine 49/cysteine 105, cysteine 56/cysteine 98, cysteine 66/cysteine 91, and cysteine 84/cysteine 96. Residue aspartate 30 participates in Zn(2+) binding. 2 residues coordinate Ca(2+): tyrosine 34 and glycine 36. Histidine 53 is an active-site residue. Residue aspartate 54 coordinates Ca(2+). The active site involves aspartate 99.

Heterodimer formed between isoform 5 and isoform 6 in presence of zinc ion and monomer in absence of zinc ion. It depends on Ca(2+) as a cofactor. Expressed by the venom gland.

The protein resides in the secreted. The enzyme catalyses a 1,2-diacyl-sn-glycero-3-phosphocholine + H2O = a 1-acyl-sn-glycero-3-phosphocholine + a fatty acid + H(+). Its function is as follows. PLA2 catalyzes the calcium-dependent hydrolysis of the 2-acyl groups in 3-sn-phosphoglycerides. This chain is Acidic phospholipase A2 6, found in Naja sagittifera (Andaman cobra).